The following is a 222-amino-acid chain: 3-dehydroquinate dehydratase (222 aa).

3-dehydroquinate-binding positions include 29–31 (ELR) and Arg55. His112 (proton donor/acceptor) is an active-site residue. Lys139 functions as the Schiff-base intermediate with substrate in the catalytic mechanism. Residues Arg178, Ser199, and Gln203 each contribute to the 3-dehydroquinate site.

Belongs to the type-I 3-dehydroquinase family. As to quaternary structure, homodimer.

The enzyme catalyses 3-dehydroquinate = 3-dehydroshikimate + H2O. The protein operates within metabolic intermediate biosynthesis; chorismate biosynthesis; chorismate from D-erythrose 4-phosphate and phosphoenolpyruvate: step 3/7. Its function is as follows. Involved in the third step of the chorismate pathway, which leads to the biosynthesis of aromatic amino acids. Catalyzes the cis-dehydration of 3-dehydroquinate (DHQ) and introduces the first double bond of the aromatic ring to yield 3-dehydroshikimate. The sequence is that of 3-dehydroquinate dehydratase from Dehalococcoides mccartyi (strain ATCC BAA-2266 / KCTC 15142 / 195) (Dehalococcoides ethenogenes (strain 195)).